A 327-amino-acid polypeptide reads, in one-letter code: Complex I intermediate-associated protein 30, mitochondrial (327 aa).

The N-terminal 24 residues, 1–24 (MALVHKLLRGTYFLRKFXKPTSAL), are a transit peptide targeting the mitochondrion. Residues 42–63 (PVASPGKASSQRKTEGDLQGDH) are disordered. Residues 53–63 (RKTEGDLQGDH) are compositionally biased toward basic and acidic residues. Ser318 carries the phosphoserine modification.

This sequence belongs to the CIA30 family. In terms of assembly, part of the mitochondrial complex I assembly/MCIA complex that comprises at least the core subunits TMEM126B, NDUFAF1, ECSIT and ACAD9 and complement subunits such as COA1 and TMEM186. Interacts with ECSIT. Interacts with ACAD9. At early stages of complex I assembly, it is found in intermediate subcomplexes that contain different subunits including NDUFB6, NDUFA6, NDUFA9, NDUFS3, NDUFS7, ND1, ND2 and ND3. Interacts with TMEM70 and TMEM242.

Its subcellular location is the mitochondrion. The protein localises to the mitochondrion matrix. Functionally, as part of the MCIA complex, involved in the assembly of the mitochondrial complex I. The polypeptide is Complex I intermediate-associated protein 30, mitochondrial (Pan troglodytes (Chimpanzee)).